The chain runs to 289 residues: Tachykinins (289 aa).

The first 24 residues, 1 to 24 (MRSQGGSFAVALLLLLLLTAAATA), serve as a signal peptide directing secretion. The propeptide occupies 25-49 (ADAEPDVESSVSTLPPGADAPRRMV). The disordered stretch occupies residues 28–80 (EPDVESSVSTLPPGADAPRRMVKRAPTSSFIGMRGKKEDEKDQRAADWMGPDP). Residue R61 is modified to Arginine amide. Over residues 62 to 72 (GKKEDEKDQRA) the composition is skewed to basic and acidic residues. The residue at position 95 (N95) is an Asparagine amide. R110 is modified (arginine amide). V155 is subject to Valine amide. Positions 156–175 (GKRAPTGFTGMRGKRPMSGD) are disordered. R167, R198, R237, and R281 each carry arginine amide. A propeptide spanning residues 285–289 (PALAE) is cleaved from the precursor.

It belongs to the tachykinin family.

It localises to the secreted. Tachykinins are active peptides which excite neurons, evoke behavioral responses, are potent vasodilators and secretagogues, and contract (directly or indirectly) many smooth muscles. Stimulates gut muscle contractions. This chain is Tachykinins, found in Drosophila pseudoobscura pseudoobscura (Fruit fly).